The sequence spans 103 residues: Phosphoribosyl-ATP pyrophosphatase (103 aa).

The protein belongs to the PRA-PH family.

It localises to the cytoplasm. It catalyses the reaction 1-(5-phospho-beta-D-ribosyl)-ATP + H2O = 1-(5-phospho-beta-D-ribosyl)-5'-AMP + diphosphate + H(+). It participates in amino-acid biosynthesis; L-histidine biosynthesis; L-histidine from 5-phospho-alpha-D-ribose 1-diphosphate: step 2/9. In Listeria monocytogenes serotype 4b (strain CLIP80459), this protein is Phosphoribosyl-ATP pyrophosphatase.